Reading from the N-terminus, the 152-residue chain is Nucleoside diphosphate kinase B (152 aa).

The tract at residues 1 to 66 is interaction with AKAP13; sequence MANLERTFIA…DRPFFPGLVK (66 aa). Residues Lys-12, Phe-60, Arg-88, Thr-94, Arg-105, and Asn-115 each coordinate ATP. The active-site Pros-phosphohistidine intermediate is His-118.

This sequence belongs to the NDK family. As to quaternary structure, hexamer of two different chains: An and B (A6, A5B, A4B2, A3B3, A2B4, AB5, B6). Interacts with CAPN8. Interacts with AKAP13. Interacts with ITGB1BP1 (via C-terminal domain region). Interacts with BCL2L10. Requires Mg(2+) as cofactor. In terms of tissue distribution, expressed in the base region of the oxyntic and pyloric mucosae.

The protein localises to the cytoplasm. It is found in the cell projection. The protein resides in the lamellipodium. It localises to the ruffle. Its subcellular location is the nucleus. The catalysed reaction is a 2'-deoxyribonucleoside 5'-diphosphate + ATP = a 2'-deoxyribonucleoside 5'-triphosphate + ADP. It carries out the reaction a ribonucleoside 5'-diphosphate + ATP = a ribonucleoside 5'-triphosphate + ADP. The enzyme catalyses ATP + protein L-histidine = ADP + protein N-phospho-L-histidine.. In terms of biological role, major role in the synthesis of nucleoside triphosphates other than ATP. The ATP gamma phosphate is transferred to the NDP beta phosphate via a ping-pong mechanism, using a phosphorylated active-site intermediate. Negatively regulates Rho activity by interacting with AKAP13/LBC. Acts as a transcriptional activator of the MYC gene; binds DNA non-specifically. Binds to both single-stranded guanine- and cytosine-rich strands within the nuclease hypersensitive element (NHE) III(1) region of the MYC gene promoter. Does not bind to duplex NHE III(1). Has G-quadruplex (G4) DNA-binding activity, which is independent of its nucleotide-binding and kinase activity. Binds both folded and unfolded G4 with similar low nanomolar affinities. Stabilizes folded G4s regardless of whether they are prefolded or not. Exhibits histidine protein kinase activity. The chain is Nucleoside diphosphate kinase B (Nme2) from Mus musculus (Mouse).